The following is a 632-amino-acid chain: Tail spike protein (632 aa).

Positions 505 to 630 (SDARCKTEPL…KRMQEALAAL (126 aa)) constitute a Peptidase S74 domain.

In terms of assembly, homotrimer. Proteolytic cleavage and release of the chaperone in the host cytosol stabilizes the folded protein. The cleavage gives rise to the mature tail spike protein but is not essential for catalytic activity.

It is found in the virion. Its function is as follows. Functions as a receptor binding protein (RBP) and probably mediates the attachment to the host capsular exopolysaccharides. Displays a depolymerase activity that specifically degrades the K5-type polysaccharides of Escherichia coli capsule. The C-terminal chaperone protein mediates homotrimerization and proper folding of the catalytic trimer. The sequence is that of Tail spike protein (kflA) from Escherichia virus K5 (Bacteriophage K5).